The following is a 509-amino-acid chain: MEQKYLLQPGKLTIETMRQVHRRHVPITLAPDSFERIHSAEQTVRDVITQGRTVYGINTGFGLLANTKIEVDELELLQRSIVLSHAAGIGTLMSASTVRLLMLLKINSLARGYSGIRLIVIEALIALYNHQVYPAIPEKGSVGASGDLAPLAHMSAVLLGEGEVIYQGNQISAEKGLMIAGLQPISLAPKEGLALLNGTQASTAFALQGLFYAENALTSSIAIGALSVDAALGSRVPFNERIHIVRGHQAQIDVATGFRTLLQESEIGKSHGGCEKVQDPYSLRCQPQVMGACLQQMRFAKQILVTEANGVSDNPIVFSESDDVLSGGNFHAETVAMAADMLAIALAEIGALSERRMALLIDSSLSGLPPFLVDNGGVNSGFMIAQVTSAALASENKSYAHPASIDSLPTSANQEDHVSMATFAGRRLRDIFDNVAGILAIEWLAASQGIDFRFPLKTSTQLQSVHALMRSKVTFYDKDRYFSPDIEQAKLLITRHSLSDLVQQDIQLL.

A cross-link (5-imidazolinone (Ala-Gly)) is located at residues 144-146 (ASG). Ser145 is subject to 2,3-didehydroalanine (Ser).

Belongs to the PAL/histidase family. In terms of processing, contains an active site 4-methylidene-imidazol-5-one (MIO), which is formed autocatalytically by cyclization and dehydration of residues Ala-Ser-Gly.

The protein localises to the cytoplasm. It catalyses the reaction L-histidine = trans-urocanate + NH4(+). It functions in the pathway amino-acid degradation; L-histidine degradation into L-glutamate; N-formimidoyl-L-glutamate from L-histidine: step 1/3. The chain is Histidine ammonia-lyase from Pseudoalteromonas atlantica (strain T6c / ATCC BAA-1087).